Reading from the N-terminus, the 172-residue chain is 6,7-dimethyl-8-ribityllumazine synthase (172 aa).

5-amino-6-(D-ribitylamino)uracil contacts are provided by residues Phe24, 58–60 (ALE), and 82–84 (AVI). Residue 87-88 (ET) coordinates (2S)-2-hydroxy-3-oxobutyl phosphate. Catalysis depends on His90, which acts as the Proton donor. Asn115 contacts 5-amino-6-(D-ribitylamino)uracil. Residue Arg129 participates in (2S)-2-hydroxy-3-oxobutyl phosphate binding. The disordered stretch occupies residues 150-172 (ALDQLGDDDEDEEEDEDDEEERA). Residues 154–172 (LGDDDEDEEEDEDDEEERA) show a composition bias toward acidic residues.

Belongs to the DMRL synthase family.

The enzyme catalyses (2S)-2-hydroxy-3-oxobutyl phosphate + 5-amino-6-(D-ribitylamino)uracil = 6,7-dimethyl-8-(1-D-ribityl)lumazine + phosphate + 2 H2O + H(+). It participates in cofactor biosynthesis; riboflavin biosynthesis; riboflavin from 2-hydroxy-3-oxobutyl phosphate and 5-amino-6-(D-ribitylamino)uracil: step 1/2. Catalyzes the formation of 6,7-dimethyl-8-ribityllumazine by condensation of 5-amino-6-(D-ribitylamino)uracil with 3,4-dihydroxy-2-butanone 4-phosphate. This is the penultimate step in the biosynthesis of riboflavin. The protein is 6,7-dimethyl-8-ribityllumazine synthase of Burkholderia multivorans (strain ATCC 17616 / 249).